The chain runs to 642 residues: 1-deoxy-D-xylulose-5-phosphate synthase (642 aa).

Residues histidine 73 and 114–116 contribute to the thiamine diphosphate site; that span reads SHA. Residue aspartate 145 participates in Mg(2+) binding. Thiamine diphosphate-binding positions include 146–147, asparagine 175, phenylalanine 286, and glutamate 367; that span reads GA. Asparagine 175 contributes to the Mg(2+) binding site.

Belongs to the transketolase family. DXPS subfamily. Homodimer. The cofactor is Mg(2+). Thiamine diphosphate serves as cofactor.

It catalyses the reaction D-glyceraldehyde 3-phosphate + pyruvate + H(+) = 1-deoxy-D-xylulose 5-phosphate + CO2. Its pathway is metabolic intermediate biosynthesis; 1-deoxy-D-xylulose 5-phosphate biosynthesis; 1-deoxy-D-xylulose 5-phosphate from D-glyceraldehyde 3-phosphate and pyruvate: step 1/1. Its function is as follows. Catalyzes the acyloin condensation reaction between C atoms 2 and 3 of pyruvate and glyceraldehyde 3-phosphate to yield 1-deoxy-D-xylulose-5-phosphate (DXP). This Saccharopolyspora erythraea (strain ATCC 11635 / DSM 40517 / JCM 4748 / NBRC 13426 / NCIMB 8594 / NRRL 2338) protein is 1-deoxy-D-xylulose-5-phosphate synthase.